The primary structure comprises 445 residues: Vacuolar fusion protein CCZ1 homolog (445 aa).

This sequence belongs to the CCZ1 family.

The polypeptide is Vacuolar fusion protein CCZ1 homolog (Dictyostelium discoideum (Social amoeba)).